We begin with the raw amino-acid sequence, 271 residues long: Putative phosphoenolpyruvate synthase regulatory protein (271 aa).

151–158 (GVSRSGKT) contributes to the ADP binding site.

This sequence belongs to the pyruvate, phosphate/water dikinase regulatory protein family. PSRP subfamily.

It carries out the reaction [pyruvate, water dikinase] + ADP = [pyruvate, water dikinase]-phosphate + AMP + H(+). The enzyme catalyses [pyruvate, water dikinase]-phosphate + phosphate + H(+) = [pyruvate, water dikinase] + diphosphate. Its function is as follows. Bifunctional serine/threonine kinase and phosphorylase involved in the regulation of the phosphoenolpyruvate synthase (PEPS) by catalyzing its phosphorylation/dephosphorylation. The protein is Putative phosphoenolpyruvate synthase regulatory protein of Burkholderia cenocepacia (strain ATCC BAA-245 / DSM 16553 / LMG 16656 / NCTC 13227 / J2315 / CF5610) (Burkholderia cepacia (strain J2315)).